We begin with the raw amino-acid sequence, 417 residues long: uncharacterized protein (417 aa).

To M.tuberculosis Rv2067c.

This is an uncharacterized protein from Synechococcus sp. (strain ATCC 27144 / PCC 6301 / SAUG 1402/1) (Anacystis nidulans).